Here is a 250-residue protein sequence, read N- to C-terminus: MRILLTNDDGVYAKGIETLYLALIEEHDVTVVAPETEQSAVGHAITWLDPLRVKPVHRNGHFFGHALTGTPADCVKIAVAELMSPPPDMVVSGVNMGANVGVNVIYSGTVSAATEAAVMGIPSMAVSIDSFQPTDFSAVTEFVPRLLRIVAKEGLPPGVCLNVNVPNLPADRIRGVKVTRQGHMKMVERYDRRIDPRGHVYYWLTNSALLRDDDPATDSLALARDYISVTPIHHDLTHYEMIDTLGKWNL.

Residues Asp-8, Asp-9, Ser-39, and Asn-95 each contribute to the a divalent metal cation site.

This sequence belongs to the SurE nucleotidase family. It depends on a divalent metal cation as a cofactor.

The protein resides in the cytoplasm. The catalysed reaction is a ribonucleoside 5'-phosphate + H2O = a ribonucleoside + phosphate. Functionally, nucleotidase that shows phosphatase activity on nucleoside 5'-monophosphates. This Syntrophobacter fumaroxidans (strain DSM 10017 / MPOB) protein is 5'-nucleotidase SurE.